The primary structure comprises 839 residues: MLETLRGNKLHSGTSKGANKKLNELLESSDNLPSASSELGSIQVSINELRRRVFQLRSKNKASKDYTKAHYLLANSGLSFEDVDAFIKDLQTNQFLEPNPPKIIESEELEFYIRTKKEENILMSIEQLLNGATKDFDNFINHNLNLDWAQHKNEVMKNFGILIQDKKTVDHKKSISSLDPKLPSWGNKGNNILNSNESRLNVNENNILREKFENYARIVFQFNNSRQANGNFDIANEFISILSSANGTRNAQLLESWKILESMKSKDINIVEVGKQYLEQQFLQYTDNLYKKNMNEGLATNVNKIKSFIDTKLKKADKSWKISNLTVINGVPIWALIFYLLRAGLIKEALQVLVENKANIKKVEQSFLTYFKAYASSKDHGLPVEYSTKLHTEYNQHIKSSLDGDPYRLAVYKLIGRCDLSRKNIPAVTLSIEDWLWMHLMLIKEKDAENDPVYERYSLEDFQNIIISYGPSRFSNYYLQTLLLSGLYGLAIDYTYTFSEMDAVHLAIGLASLKLFKIDSSTRLTKKPKRDIRFANILANYTKSFRYSDPRVAVEYLVLITLNEGPTDVELCHEALRELVLETKEFTVLLGKIGRDGARIPGVIEERQPLLHVRDEKEFLHTITEQAARRADEDGRIYDSILLYQLAEEYDIVITLVNSLLSDTLSASDLDQPLVGPDDNSETNPVLLARRMASIYFDNAGISRQIHVKNKEICMLLLNISSIRELYFNKQWQETLSQMELLDLLPFSDELSARKKAQDFSNLDDNIVKNIPNLLIITLSCISNMIHILNESKYQSSTKGQQIDSLKNVARQCMIYAGMIQYRMPRETYSTLINIDVSL.

Residues 25-60 form a leucine zipper-like heptad repeat, required for interaction with NSP1 region; it reads LLESSDNLPSASSELGSIQVSINELRRRVFQLRSKN.

It belongs to the nucleoporin interacting component (NIC) family. In terms of assembly, component of the nuclear pore complex (NPC). NPC constitutes the exclusive means of nucleocytoplasmic transport. NPCs allow the passive diffusion of ions and small molecules and the active, nuclear transport receptor-mediated bidirectional transport of macromolecules such as proteins, RNAs, ribonucleoparticles (RNPs), and ribosomal subunits across the nuclear envelope. Due to its 8-fold rotational symmetry, all subunits are present with 8 copies or multiples thereof. NIC96 is part of three NPC subcomplexes, interacting with NSP1 of the NUP57 subcomplex (NIC96, NSP1, NUP49, NUP57), with NUP120 of the NUP84 subcomplex (SEH1, NUP85, NUP120, NUP145C, SEC13, NUP84, NUP133), and with NUP53 of the NUP53-NUP59-NUP170 subcomplex. The interaction with NUP53 is cell cycle dependent. NIC96 is also associated with the distal ring of the nuclear basket and interacts here with MLP2, which forms together with MLP1 nuclear pore-attached intranuclear filaments.

It is found in the nucleus. It localises to the nuclear pore complex. The protein localises to the nucleus membrane. Functions as a component of the nuclear pore complex (NPC). NPC components, collectively referred to as nucleoporins (NUPs), can play the role of both NPC structural components and of docking or interaction partners for transiently associated nuclear transport factors. NIC96, which is localized to the core of the NPC and the distal ring of the nuclear basket, is required for de novo assembly of NPCs. It is involved in nuclear GSP1 import. This Saccharomyces cerevisiae (strain ATCC 204508 / S288c) (Baker's yeast) protein is Nucleoporin NIC96 (NIC96).